The following is a 313-amino-acid chain: MMENYKHTTVLLDEAVNGLNIRPDGIYIDGTFGRGGHSRLILSQLGEEGRLLAIDRDPQAIAVAKTIDDPRFSIIHGPFSALGEYVAERDLIGKIDGILLDLGVSSPQLDDAERGFSFMRDGPLDMRMDPTRGQSAAEWLQTAEEADIAWVLKTYGEERFAKRIARAIVERNREQPMTRTKELAEVVAAATPVKDKFKHPATRTFQAVRIWVNSELEEIEQALKSSLNVLASGGRLSIISFHSLEDRIVKRFMRENSRGPQVPAGLPMTEEQLKKLGGRQLRALGKLMPGEEEVAENPRARSSVLRIAERTNA.

Residues 35–37, Asp-55, Phe-79, Asp-101, and Gln-108 contribute to the S-adenosyl-L-methionine site; that span reads GGH.

It belongs to the methyltransferase superfamily. RsmH family.

It is found in the cytoplasm. The enzyme catalyses cytidine(1402) in 16S rRNA + S-adenosyl-L-methionine = N(4)-methylcytidine(1402) in 16S rRNA + S-adenosyl-L-homocysteine + H(+). In terms of biological role, specifically methylates the N4 position of cytidine in position 1402 (C1402) of 16S rRNA. The protein is Ribosomal RNA small subunit methyltransferase H of Escherichia coli O127:H6 (strain E2348/69 / EPEC).